The primary structure comprises 451 residues: GTPase Der (451 aa).

EngA-type G domains follow at residues 5–170 and 186–359; these read PVVA…VAPP and IKLA…AAAF. Residues 11-18, 58-62, 122-125, 192-199, 239-243, and 304-307 contribute to the GTP site; these read GRPNVGKS, DTGGF, NKAE, DTAGL, and NKWD. The KH-like domain maps to 360-444; the sequence is AKLSTPRLTR…PLRIEFKSSR (85 aa).

Belongs to the TRAFAC class TrmE-Era-EngA-EngB-Septin-like GTPase superfamily. EngA (Der) GTPase family. As to quaternary structure, associates with the 50S ribosomal subunit.

GTPase that plays an essential role in the late steps of ribosome biogenesis. The polypeptide is GTPase Der (Bordetella bronchiseptica (strain ATCC BAA-588 / NCTC 13252 / RB50) (Alcaligenes bronchisepticus)).